The chain runs to 301 residues: Probable alpha-L-glutamate ligase 1 (301 aa).

The 184-residue stretch at 104–287 (MQLMSRRGIG…VAGAIIDFVE (184 aa)) folds into the ATP-grasp domain. ATP is bound by residues lysine 141, 178–179 (EY), aspartate 187, and 211–213 (RSN). Positions 248, 260, and 262 each coordinate Mg(2+). Residues aspartate 248, glutamate 260, and asparagine 262 each coordinate Mn(2+).

The protein belongs to the RimK family. Requires Mg(2+) as cofactor. Mn(2+) is required as a cofactor.

The chain is Probable alpha-L-glutamate ligase 1 from Shewanella baltica (strain OS185).